The primary structure comprises 159 residues: Protein-export protein SecB (159 aa).

It belongs to the SecB family. Homotetramer, a dimer of dimers. One homotetramer interacts with 1 SecA dimer.

The protein resides in the cytoplasm. One of the proteins required for the normal export of preproteins out of the cell cytoplasm. It is a molecular chaperone that binds to a subset of precursor proteins, maintaining them in a translocation-competent state. It also specifically binds to its receptor SecA. The polypeptide is Protein-export protein SecB (Shewanella amazonensis (strain ATCC BAA-1098 / SB2B)).